Here is a 435-residue protein sequence, read N- to C-terminus: Manganese transport system membrane protein MntC (435 aa).

9 helical membrane-spanning segments follow: residues 17–37 (VLAG…FVLL), 42–62 (LIGD…FLFT), 68–88 (PFFL…IQLI), 98–118 (SAIG…LTYI), 143–163 (QDII…IVFF), 166–186 (FTLI…VRFL), 189–209 (LLAC…GVIL), 228–248 (LTGM…AGTL), and 255–275 (GMAT…FSMI).

Belongs to the ABC-3 integral membrane protein family. In terms of assembly, the complex is probably composed of two ATP-binding proteins (MntB), two transmembrane proteins (MntC and MntD) and a solute-binding protein (MntA).

The protein localises to the cell membrane. Its function is as follows. Probably part of the ABC transporter complex MntABCD involved in manganese import. Probably responsible for the translocation of the substrate across the membrane. The chain is Manganese transport system membrane protein MntC from Bacillus subtilis (strain 168).